The primary structure comprises 358 residues: MNEKRLFTEAQTENEAVDFTPKREFHGEMHIEKDEPVIEDRFVEQTFEHIVQPRSRWWKTGLALTALLFCFAVIAQSIQWLVDTWQQNQWIYFVFSLVTCLVVLLGVSSLGKEWLRLVKLKKRLSLQQKSQQILRESAVNLGQDFCAEKHQQIKALCTEMAQMLKLSSEDPGLIQWQNQLHDAYSAQEVAHLFSQTVLHPFDVQIKKLISKSALEAAVIVAVSPLAVIDMFFLSWRNIRLVNQIAQIYGIELGYWSRLRLLKMVLLNLAFAGATEVVQDIGLDWLSQDLTAKLSARAAQGIGVGLLTARLGIKAMEFCRPLAFQAGEKPRLNHIQQELLGQLRSTFFRSNKTKVKQQV.

The next 3 helical transmembrane spans lie at 62 to 82 (LALT…QWLV), 90 to 110 (WIYF…VSSL), and 213 to 233 (ALEA…MFFL).

The protein belongs to the UPF0283 family.

Its subcellular location is the cell inner membrane. The chain is UPF0283 membrane protein PM0909 from Pasteurella multocida (strain Pm70).